Consider the following 131-residue polypeptide: MSWQAYVDEHLMCEIEGHHLASAAILGHDGTVWAQSADFPQFKPEEITGIMKDFDEPGHLAPTGMFVAAAKYMVIQGEPGAVTRGKKGAGGITIKKTGQALVVGIYDEPMTPGQCNMVVERLGDYLVKQGL.

Cys13 and Cys115 are disulfide-bonded. Residues 81 to 97 (AVTRGKKGAGGITIKKT) carry the Involved in PIP2 interaction motif. Thr111 is subject to Phosphothreonine.

Belongs to the profilin family. In terms of assembly, occurs in many kinds of cells as a complex with monomeric actin in a 1:1 ratio. Phosphorylated by MAP kinases.

It localises to the cytoplasm. The protein resides in the cytoskeleton. Binds to actin and affects the structure of the cytoskeleton. At high concentrations, profilin prevents the polymerization of actin, whereas it enhances it at low concentrations. The sequence is that of Profilin-9 from Phleum pratense (Common timothy).